Reading from the N-terminus, the 77-residue chain is Dermatoxin-B1 (77 aa).

An N-terminal signal peptide occupies residues 1 to 22; the sequence is MAFLKKSLFLVLFLGLVPLSLC. A propeptide spanning residues 23 to 42 is cleaved from the precursor; sequence ESEKREGENEEEQEDDQSEE. A disordered region spans residues 24–45; sequence SEKREGENEEEQEDDQSEEKRS. Acidic residues predominate over residues 30 to 40; the sequence is ENEEEQEDDQS. Glutamine amide is present on Gln76.

Belongs to the frog skin active peptide (FSAP) family. Dermatoxin subfamily. As to expression, highest expression in skin and to a lesser extent in brain and intestine.

Its subcellular location is the secreted. The protein resides in the target cell membrane. Functionally, possesses a potent antimicrobial activity against Gram-positive bacteria B.megaterium, C.glutamicum and S.aureus and mollicutes A.laidlawii and S.melliferum. Less active against Gram-negative bacteria B.cepacia, P.aeruginosa, S.typhimurium and S.meliloti. Probably acts by disturbing membrane functions with its amphipathic structure. This chain is Dermatoxin-B1, found in Phyllomedusa bicolor (Two-colored leaf frog).